Reading from the N-terminus, the 284-residue chain is Acetylglutamate kinase (284 aa).

Substrate is bound by residues 66-67, arginine 88, and asparagine 179; that span reads GG.

Belongs to the acetylglutamate kinase family. ArgB subfamily.

It localises to the cytoplasm. It carries out the reaction N-acetyl-L-glutamate + ATP = N-acetyl-L-glutamyl 5-phosphate + ADP. The protein operates within amino-acid biosynthesis; L-arginine biosynthesis; N(2)-acetyl-L-ornithine from L-glutamate: step 2/4. Its function is as follows. Catalyzes the ATP-dependent phosphorylation of N-acetyl-L-glutamate. The chain is Acetylglutamate kinase from Actinobacillus pleuropneumoniae serotype 7 (strain AP76).